A 491-amino-acid chain; its full sequence is ATP synthase subunit beta, chloroplastic (491 aa).

172 to 179 serves as a coordination point for ATP; sequence GGAGVGKT.

Belongs to the ATPase alpha/beta chains family. As to quaternary structure, F-type ATPases have 2 components, CF(1) - the catalytic core - and CF(0) - the membrane proton channel. CF(1) has five subunits: alpha(3), beta(3), gamma(1), delta(1), epsilon(1). CF(0) has four main subunits: a(1), b(1), b'(1) and c(9-12).

It localises to the plastid. It is found in the chloroplast thylakoid membrane. It catalyses the reaction ATP + H2O + 4 H(+)(in) = ADP + phosphate + 5 H(+)(out). Its function is as follows. Produces ATP from ADP in the presence of a proton gradient across the membrane. The catalytic sites are hosted primarily by the beta subunits. This chain is ATP synthase subunit beta, chloroplastic, found in Pisum sativum (Garden pea).